Consider the following 44-residue polypeptide: Cytochrome b559 subunit beta (44 aa).

A helical membrane pass occupies residues W19–A35. H23 is a heme binding site.

It belongs to the PsbE/PsbF family. In terms of assembly, heterodimer of an alpha subunit and a beta subunit. PSII is composed of 1 copy each of membrane proteins PsbA, PsbB, PsbC, PsbD, PsbE, PsbF, PsbH, PsbI, PsbJ, PsbK, PsbL, PsbM, PsbT, PsbX, PsbY, PsbZ, Psb30/Ycf12, at least 3 peripheral proteins of the oxygen-evolving complex and a large number of cofactors. It forms dimeric complexes. Requires heme b as cofactor.

The protein resides in the plastid. It is found in the chloroplast thylakoid membrane. Functionally, this b-type cytochrome is tightly associated with the reaction center of photosystem II (PSII). PSII is a light-driven water:plastoquinone oxidoreductase that uses light energy to abstract electrons from H(2)O, generating O(2) and a proton gradient subsequently used for ATP formation. It consists of a core antenna complex that captures photons, and an electron transfer chain that converts photonic excitation into a charge separation. In Porphyra purpurea (Red seaweed), this protein is Cytochrome b559 subunit beta.